The sequence spans 655 residues: Acetyl-coenzyme A synthetase (655 aa).

CoA contacts are provided by residues Arg193–Lys196 and Thr313. Residues Gly389 to Pro391, Asp413 to Thr418, Asp502, and Arg517 each bind ATP. Ser525 provides a ligand contact to CoA. ATP is bound at residue Arg528. Mg(2+) contacts are provided by Val539 and His541. CoA is bound at residue Arg586. N6-acetyllysine is present on Lys611.

Belongs to the ATP-dependent AMP-binding enzyme family. The cofactor is Mg(2+). In terms of processing, acetylated. Deacetylation by the SIR2-homolog deacetylase activates the enzyme.

The enzyme catalyses acetate + ATP + CoA = acetyl-CoA + AMP + diphosphate. In terms of biological role, catalyzes the conversion of acetate into acetyl-CoA (AcCoA), an essential intermediate at the junction of anabolic and catabolic pathways. AcsA undergoes a two-step reaction. In the first half reaction, AcsA combines acetate with ATP to form acetyl-adenylate (AcAMP) intermediate. In the second half reaction, it can then transfer the acetyl group from AcAMP to the sulfhydryl group of CoA, forming the product AcCoA. The sequence is that of Acetyl-coenzyme A synthetase from Psychrobacter cryohalolentis (strain ATCC BAA-1226 / DSM 17306 / VKM B-2378 / K5).